We begin with the raw amino-acid sequence, 428 residues long: Putative aminotransferase MSMEG_6286/MSMEI_6121 (428 aa).

Residue Gly37 participates in substrate binding. Residues Tyr72, 102–105, Asn191, 222–225, and 256–258 each bind pyridoxal 5'-phosphate; these read ASLE, AYAV, and STS. Lys339 participates in a covalent cross-link: Isoglutamyl lysine isopeptide (Lys-Gln) (interchain with Q-Cter in protein Pup).

It belongs to the class-I pyridoxal-phosphate-dependent aminotransferase family. Requires pyridoxal 5'-phosphate as cofactor.

The sequence is that of Putative aminotransferase MSMEG_6286/MSMEI_6121 from Mycolicibacterium smegmatis (strain ATCC 700084 / mc(2)155) (Mycobacterium smegmatis).